Here is a 449-residue protein sequence, read N- to C-terminus: MGKLFGTDGVRGVANEYPMTAEMALNIGRATAFMFKREGHNPKILIGKDTRLSGYMLENALVSGICSMGVNAILVGVIPTPGIAYLTSSMRADAGIVISASHNPFQDNGIKIFSGDGFKLPDETELAIEDMILNNKMDQLLPRVSELGKAYRMDDARGRYIVFLKHTFPRELSLEGVKVVLDCANGATYRVAPETFYELGAEVTTLFDDPDGRNINVNCGSQYPETLAAEVLKQGADVGFAFDGDGDRLIAVDEKGNVLTGDQVIAICANVMKKEGKLTKNLVVRTVMSNIGLSVALEKLDINSIMTKVGDRYVLEEMQANGSSIGGEDSGHVIFLQHHTTGDGIVTAIQVIAAMKKEGKPLSDLAKIMDVFPQTLINVDTKSRPEISTVPELVAVIKSVEEKLGTSGRVLVRYSGTQNMCRVMVEGPTQEETLKYCKQIADVVKEELG.

Catalysis depends on Ser-101, which acts as the Phosphoserine intermediate. 4 residues coordinate Mg(2+): Ser-101, Asp-243, Asp-245, and Asp-247. Ser-101 is modified (phosphoserine).

The protein belongs to the phosphohexose mutase family. Requires Mg(2+) as cofactor. In terms of processing, activated by phosphorylation.

The enzyme catalyses alpha-D-glucosamine 1-phosphate = D-glucosamine 6-phosphate. Functionally, catalyzes the conversion of glucosamine-6-phosphate to glucosamine-1-phosphate. This Syntrophus aciditrophicus (strain SB) protein is Phosphoglucosamine mutase.